A 1969-amino-acid chain; its full sequence is Myosin-3 (1969 aa).

One can recognise a Myosin N-terminal SH3-like domain in the interval 33 to 82 (DSKKNCWIPDPEDGFVAAEIQSTTGDQVTVVTVKGNQITVKKDQCQEMNP). The Myosin motor domain maps to 86–791 (DKTEDMANLT…VLAKLEDLRD (706 aa)). An N6,N6,N6-trimethyllysine modification is found at K130. 179–186 (GESGAGKT) contributes to the ATP binding site. Actin-binding regions lie at residues 667 to 689 (LNNL…IPNE) and 770 to 784 (KIGE…GVLA). An IQ domain is found at 794–823 (LSRIVTMFQSRIRSYLAKAEVRRRYEQQTG). A coiled-coil region spans residues 853 to 1941 (LKAGKEQEAM…KMRNKIRASA (1089 aa)). 3 disordered regions span residues 943-967 (QERH…KKHV), 993-1029 (DEMA…EEDK), and 1134-1153 (ELES…NELQ). 2 stretches are compositionally biased toward basic and acidic residues: residues 1001-1029 (SVAK…EEDK) and 1137-1153 (SERN…NELQ).

The protein belongs to the TRAFAC class myosin-kinesin ATPase superfamily. Myosin family. As to quaternary structure, muscle myosin is a hexameric protein that consists of 2 heavy chain subunits (MHC), 2 alkali light chain subunits (MLC) and 2 regulatory light chain subunits (MLC-2).

It localises to the cytoplasm. It is found in the myofibril. The protein resides in the sarcomere. Its subcellular location is the a band. Essential for muscle contraction. Involved in ovulation likely by regulating the contraction of gonadal myoepithelial sheath cells. This is Myosin-3 from Caenorhabditis briggsae.